A 636-amino-acid chain; its full sequence is Probable potassium transport system protein Kup (636 aa).

Transmembrane regions (helical) follow at residues 22–42, 64–84, 114–134, 150–170, 182–202, 220–240, 261–281, 293–313, 351–371, 383–403, 408–428, and 433–453; these read MGLLVAAVGVVYGDIGTSPLY, ILSLILWSLLWVVSFKYVMFI, ALMVGCGLVGASLFYGDSMIT, FEGIDHWVVPISLVVLVALFL, LFGPIMVTWFVVLGALGVHGI, FFIVHPGMGVAILGAVVLALT, WFALVLPALVLNYFGQGAILL, LLAPGWALLPLVGLATMATVI, IYIGAVNWTLMVGVVLLVIGF, VAVTGTMLMTTILVSAVMLLL, PVLAVPLLVGFLLVDGLFFAA, and IVQGGAFPVLAGIVLFVLMST.

The protein belongs to the HAK/KUP transporter (TC 2.A.72) family.

The protein localises to the cell inner membrane. It catalyses the reaction K(+)(in) + H(+)(in) = K(+)(out) + H(+)(out). Its function is as follows. Transport of potassium into the cell. Likely operates as a K(+):H(+) symporter. The chain is Probable potassium transport system protein Kup from Pseudomonas entomophila (strain L48).